Reading from the N-terminus, the 242-residue chain is Large ribosomal subunit protein uL1 (242 aa).

It belongs to the universal ribosomal protein uL1 family. In terms of assembly, part of the 50S ribosomal subunit.

Binds directly to 23S rRNA. The L1 stalk is quite mobile in the ribosome, and is involved in E site tRNA release. In terms of biological role, protein L1 is also a translational repressor protein, it controls the translation of the L11 operon by binding to its mRNA. This is Large ribosomal subunit protein uL1 from Persephonella marina (strain DSM 14350 / EX-H1).